Consider the following 450-residue polypeptide: Interferon-related developmental regulator 1 (450 aa).

Residues methionine 1 to proline 10 show a composition bias toward basic residues. Residues methionine 1–serine 46 are disordered. Low complexity predominate over residues alanine 22–glycine 32.

The protein belongs to the IFRD family. In terms of assembly, interacts with PSIP1/LEDGF.

Its function is as follows. Could play a role in regulating gene activity in the proliferative and/or differentiative pathways induced by NGF. May be an autocrine factor that attenuates or amplifies the initial ligand-induced signal. The polypeptide is Interferon-related developmental regulator 1 (IFRD1) (Sus scrofa (Pig)).